The chain runs to 208 residues: Small ribosomal subunit protein uS4 (208 aa).

Residues 98 to 160 enclose the S4 RNA-binding domain; that stretch reads RRIDNTVYRL…SRQLQMINEA (63 aa).

This sequence belongs to the universal ribosomal protein uS4 family. In terms of assembly, part of the 30S ribosomal subunit. Contacts protein S5. The interaction surface between S4 and S5 is involved in control of translational fidelity.

One of the primary rRNA binding proteins, it binds directly to 16S rRNA where it nucleates assembly of the body of the 30S subunit. Its function is as follows. With S5 and S12 plays an important role in translational accuracy. This is Small ribosomal subunit protein uS4 from Syntrophobacter fumaroxidans (strain DSM 10017 / MPOB).